The sequence spans 311 residues: MIKVVFFGTSTLSKCCLEAIFQDPEFVVCGVVTQPDKVNERNNKINFSAVKQFCIENNIPCFQPEKNIQIKTELAQLQADIGVCVAFGQYIHNDIINLFPYKIANLHPSKLPLLRGGAPLHWTIINGFTTSSLSVIELVQKMDAGPIWKQKDFKVNPNWNTGDLFEYVQTHAPQFLIQCLKEIVSGKSQWKEQINPPTFGLNIKKEQERLDLNLEPKAFINWVKGLAPKPGGWLEFEGQNIKILQATYLGKMTSTTAVGQITKISKQGIEIALANDEIVLLQIIQIPGKRAMGVSEIINGKHPFAEGKFFH.

109–112 (SKLP) lines the (6S)-5,6,7,8-tetrahydrofolate pocket.

The protein belongs to the Fmt family.

The catalysed reaction is L-methionyl-tRNA(fMet) + (6R)-10-formyltetrahydrofolate = N-formyl-L-methionyl-tRNA(fMet) + (6S)-5,6,7,8-tetrahydrofolate + H(+). Its function is as follows. Attaches a formyl group to the free amino group of methionyl-tRNA(fMet). The formyl group appears to play a dual role in the initiator identity of N-formylmethionyl-tRNA by promoting its recognition by IF2 and preventing the misappropriation of this tRNA by the elongation apparatus. The protein is Methionyl-tRNA formyltransferase (fmt) of Mycoplasma pneumoniae (strain ATCC 29342 / M129 / Subtype 1) (Mycoplasmoides pneumoniae).